The chain runs to 98 residues: NADH-ubiquinone oxidoreductase chain 4L (98 aa).

3 consecutive transmembrane segments (helical) span residues 1-21 (MSMVYANIFMAFVVSLMGMLV), 29-49 (SLLCLEGMMLSLFVMMSVTIL), and 61-81 (IILLVFAACEAALGLSLLVMV).

Belongs to the complex I subunit 4L family. As to quaternary structure, core subunit of respiratory chain NADH dehydrogenase (Complex I) which is composed of 45 different subunits.

It localises to the mitochondrion inner membrane. It carries out the reaction a ubiquinone + NADH + 5 H(+)(in) = a ubiquinol + NAD(+) + 4 H(+)(out). Core subunit of the mitochondrial membrane respiratory chain NADH dehydrogenase (Complex I) which catalyzes electron transfer from NADH through the respiratory chain, using ubiquinone as an electron acceptor. Part of the enzyme membrane arm which is embedded in the lipid bilayer and involved in proton translocation. The protein is NADH-ubiquinone oxidoreductase chain 4L (MT-ND4L) of Odobenus rosmarus rosmarus (Atlantic walrus).